A 236-amino-acid chain; its full sequence is uncharacterized protein (236 aa).

The DPCK domain maps to 3 to 208 (ILGLTGSIAT…PSYFFTLLCL (206 aa)). 8 to 15 (GSIATGKS) is an ATP binding site. Phosphoserine occurs at positions 82 and 86.

The protein belongs to the CoaE family.

Its subcellular location is the cytoplasm. This is an uncharacterized protein from Schizosaccharomyces pombe (strain 972 / ATCC 24843) (Fission yeast).